The sequence spans 273 residues: 2,3,4,5-tetrahydropyridine-2,6-dicarboxylate N-succinyltransferase (273 aa).

Arg104 and Asp141 together coordinate substrate.

Belongs to the transferase hexapeptide repeat family. As to quaternary structure, homotrimer.

Its subcellular location is the cytoplasm. The enzyme catalyses (S)-2,3,4,5-tetrahydrodipicolinate + succinyl-CoA + H2O = (S)-2-succinylamino-6-oxoheptanedioate + CoA. It functions in the pathway amino-acid biosynthesis; L-lysine biosynthesis via DAP pathway; LL-2,6-diaminopimelate from (S)-tetrahydrodipicolinate (succinylase route): step 1/3. In Nitrosomonas europaea (strain ATCC 19718 / CIP 103999 / KCTC 2705 / NBRC 14298), this protein is 2,3,4,5-tetrahydropyridine-2,6-dicarboxylate N-succinyltransferase.